The following is a 164-amino-acid chain: Protein-export protein SecB (164 aa).

This sequence belongs to the SecB family. Homotetramer, a dimer of dimers. One homotetramer interacts with 1 SecA dimer.

Its subcellular location is the cytoplasm. Its function is as follows. One of the proteins required for the normal export of preproteins out of the cell cytoplasm. It is a molecular chaperone that binds to a subset of precursor proteins, maintaining them in a translocation-competent state. It also specifically binds to its receptor SecA. The protein is Protein-export protein SecB of Zymomonas mobilis subsp. mobilis (strain ATCC 31821 / ZM4 / CP4).